The sequence spans 282 residues: 2-dehydro-3-deoxyphosphooctonate aldolase (282 aa).

It belongs to the KdsA family.

The protein localises to the cytoplasm. The catalysed reaction is D-arabinose 5-phosphate + phosphoenolpyruvate + H2O = 3-deoxy-alpha-D-manno-2-octulosonate-8-phosphate + phosphate. Its pathway is carbohydrate biosynthesis; 3-deoxy-D-manno-octulosonate biosynthesis; 3-deoxy-D-manno-octulosonate from D-ribulose 5-phosphate: step 2/3. It participates in bacterial outer membrane biogenesis; lipopolysaccharide biosynthesis. The polypeptide is 2-dehydro-3-deoxyphosphooctonate aldolase (Bordetella avium (strain 197N)).